The chain runs to 790 residues: Endonuclease MutS2 (790 aa).

334–341 is an ATP binding site; it reads GPNTGGKT. The region spanning 715–790 is the Smr domain; that stretch reads IDVRGQNLEE…GMGVTIVHLK (76 aa).

Belongs to the DNA mismatch repair MutS family. MutS2 subfamily. Homodimer. Binds to stalled ribosomes, contacting rRNA.

In terms of biological role, endonuclease that is involved in the suppression of homologous recombination and thus may have a key role in the control of bacterial genetic diversity. Its function is as follows. Acts as a ribosome collision sensor, splitting the ribosome into its 2 subunits. Detects stalled/collided 70S ribosomes which it binds and splits by an ATP-hydrolysis driven conformational change. Acts upstream of the ribosome quality control system (RQC), a ribosome-associated complex that mediates the extraction of incompletely synthesized nascent chains from stalled ribosomes and their subsequent degradation. Probably generates substrates for RQC. This Alkaliphilus oremlandii (strain OhILAs) (Clostridium oremlandii (strain OhILAs)) protein is Endonuclease MutS2.